A 162-amino-acid polypeptide reads, in one-letter code: MEFKRKKEFKMIEKISKGLSLNKQKEQTVLEILPHEDENSKLLRLKRGSWESQKEPWLVYDEKGKLHALLSIETLSKMIEHFKNAEKETLFLKLEKSILQHLPLDFHDVWTVAMEEIKKSKKSDMDFDALIKKIKTEHPNLFLDLKDLYLPEGASVISTIER.

The protein belongs to the UPF0763 family.

This Sulfurospirillum deleyianum (strain ATCC 51133 / DSM 6946 / 5175) protein is UPF0763 protein Sdel_0383.